A 227-amino-acid polypeptide reads, in one-letter code: Ion-translocating oxidoreductase complex subunit E (227 aa).

6 helical membrane passes run 18 to 38 (ALVQLLGLCPLLAVSATVTNA), 39 to 59 (LGLGIATILVLVGSNLIVSLV), 69 to 89 (IPVFVMIIASLVTCVQLLMNA), 93 to 113 (GLYLSLGIFIPLIVTNCIIIG), 125 to 145 (LPAVLDGLWMGMGMTAVLVLL), and 182 to 202 (HFLLAMLPPGAFLGVGFLIAL).

It belongs to the NqrDE/RnfAE family. In terms of assembly, the complex is composed of six subunits: RnfA, RnfB, RnfC, RnfD, RnfE and RnfG.

It localises to the cell inner membrane. Its function is as follows. Part of a membrane-bound complex that couples electron transfer with translocation of ions across the membrane. In Aliivibrio fischeri (strain ATCC 700601 / ES114) (Vibrio fischeri), this protein is Ion-translocating oxidoreductase complex subunit E.